The primary structure comprises 241 residues: Dephospho-CoA kinase CAB5 (241 aa).

A DPCK domain is found at 3-211; that stretch reads VVGLTGGIAC…PSKLRTVLEY (209 aa). 8–15 is a binding site for ATP; the sequence is GGIACGKS.

Belongs to the CoaE family.

The protein resides in the endoplasmic reticulum. It localises to the mitochondrion. The protein localises to the nucleus. The catalysed reaction is 3'-dephospho-CoA + ATP = ADP + CoA + H(+). Its pathway is cofactor biosynthesis; coenzyme A biosynthesis; CoA from (R)-pantothenate: step 5/5. In terms of biological role, catalyzes the phosphorylation of the 3'-hydroxyl group of dephosphocoenzyme A to form coenzyme A. The polypeptide is Dephospho-CoA kinase CAB5 (CAB5) (Saccharomyces cerevisiae (strain ATCC 204508 / S288c) (Baker's yeast)).